A 310-amino-acid polypeptide reads, in one-letter code: Cytochrome f (310 aa).

The signal sequence occupies residues 1–23 (MRRLIPILLGSLVLSLSILVAPA). Positions 28, 48, 51, and 52 each coordinate heme. A helical transmembrane segment spans residues 277–297 (IYGLLAFFVAVSLAQILLVLK).

Belongs to the cytochrome f family. The 4 large subunits of the cytochrome b6-f complex are cytochrome b6, subunit IV (17 kDa polypeptide, PetD), cytochrome f and the Rieske protein, while the 4 small subunits are PetG, PetL, PetM and PetN. The complex functions as a dimer. It depends on heme as a cofactor.

It localises to the cellular thylakoid membrane. Functionally, component of the cytochrome b6-f complex, which mediates electron transfer between photosystem II (PSII) and photosystem I (PSI), cyclic electron flow around PSI, and state transitions. The chain is Cytochrome f from Prochlorococcus marinus (strain MIT 9303).